Reading from the N-terminus, the 492-residue chain is GlcNAc-binding protein A (492 aa).

The signal sequence occupies residues 1–23 (MNKSSTKTLIALSMMAVSSGVSA). The 181-residue stretch at 24–204 (HGYVSETNDG…AFYNVIDVKF (181 aa)) folds into the Chitin-binding type-4 domain. In terms of domain architecture, Chitin-binding type-3 spans 443-484 (AGTKVLAEDGNVYQCKEFPYSGYCVQWTETATNFAPGVGSDW).

This sequence belongs to the GbpA family.

It localises to the secreted. Its function is as follows. Probably interacts with GlcNAc residues. May promote attachment to both epithelial cell surfaces and chitin. The chain is GlcNAc-binding protein A from Aliivibrio fischeri (strain ATCC 700601 / ES114) (Vibrio fischeri).